The following is a 380-amino-acid chain: L-lactate dehydrogenase (380 aa).

The FMN hydroxy acid dehydrogenase domain occupies 1–380; sequence MIISSPNDYR…TRDSLVGLPR (380 aa). Residue Y24 coordinates substrate. 2 residues coordinate FMN: S106 and Q127. Substrate is bound at residue Y129. FMN is bound at residue T155. R164 provides a ligand contact to substrate. K251 contacts FMN. The active-site Proton acceptor is H275. A substrate-binding site is contributed by R278. 306-330 contributes to the FMN binding site; it reads DSGIRTGLDVVRMLALGAKGVLLGR.

The protein belongs to the FMN-dependent alpha-hydroxy acid dehydrogenase family. The cofactor is FMN.

Its subcellular location is the cell inner membrane. The enzyme catalyses (S)-lactate + A = pyruvate + AH2. Catalyzes the conversion of L-lactate to pyruvate. Is coupled to the respiratory chain. This chain is L-lactate dehydrogenase, found in Azorhizobium caulinodans (strain ATCC 43989 / DSM 5975 / JCM 20966 / LMG 6465 / NBRC 14845 / NCIMB 13405 / ORS 571).